We begin with the raw amino-acid sequence, 426 residues long: Serine--tRNA ligase (426 aa).

Residue 233–235 coordinates L-serine; it reads TAE. 264–266 provides a ligand contact to ATP; the sequence is RRE. Position 287 (glutamate 287) interacts with L-serine. 351–354 serves as a coordination point for ATP; the sequence is EISS. Serine 386 is a binding site for L-serine.

This sequence belongs to the class-II aminoacyl-tRNA synthetase family. Type-1 seryl-tRNA synthetase subfamily. Homodimer. The tRNA molecule binds across the dimer.

It localises to the cytoplasm. The catalysed reaction is tRNA(Ser) + L-serine + ATP = L-seryl-tRNA(Ser) + AMP + diphosphate + H(+). The enzyme catalyses tRNA(Sec) + L-serine + ATP = L-seryl-tRNA(Sec) + AMP + diphosphate + H(+). Its pathway is aminoacyl-tRNA biosynthesis; selenocysteinyl-tRNA(Sec) biosynthesis; L-seryl-tRNA(Sec) from L-serine and tRNA(Sec): step 1/1. Its function is as follows. Catalyzes the attachment of serine to tRNA(Ser). Is also able to aminoacylate tRNA(Sec) with serine, to form the misacylated tRNA L-seryl-tRNA(Sec), which will be further converted into selenocysteinyl-tRNA(Sec). This is Serine--tRNA ligase from Prochlorococcus marinus (strain NATL1A).